The sequence spans 269 residues: Putative pyruvate, phosphate dikinase regulatory protein (269 aa).

147-154 (GLSRTSKT) contacts ADP.

It belongs to the pyruvate, phosphate/water dikinase regulatory protein family. PDRP subfamily.

It catalyses the reaction N(tele)-phospho-L-histidyl/L-threonyl-[pyruvate, phosphate dikinase] + ADP = N(tele)-phospho-L-histidyl/O-phospho-L-threonyl-[pyruvate, phosphate dikinase] + AMP + H(+). It carries out the reaction N(tele)-phospho-L-histidyl/O-phospho-L-threonyl-[pyruvate, phosphate dikinase] + phosphate + H(+) = N(tele)-phospho-L-histidyl/L-threonyl-[pyruvate, phosphate dikinase] + diphosphate. Bifunctional serine/threonine kinase and phosphorylase involved in the regulation of the pyruvate, phosphate dikinase (PPDK) by catalyzing its phosphorylation/dephosphorylation. The polypeptide is Putative pyruvate, phosphate dikinase regulatory protein (Clostridium botulinum (strain 657 / Type Ba4)).